Consider the following 87-residue polypeptide: Small ribosomal subunit protein bS20 (87 aa).

Residues Met-1–Arg-29 form a disordered region. Polar residues predominate over residues His-20–Arg-29.

The protein belongs to the bacterial ribosomal protein bS20 family.

Binds directly to 16S ribosomal RNA. The protein is Small ribosomal subunit protein bS20 of Janthinobacterium sp. (strain Marseille) (Minibacterium massiliensis).